Reading from the N-terminus, the 698-residue chain is Probable Xaa-Pro aminopeptidase P (698 aa).

Mn(2+)-binding residues include Asp-509, Asp-520, Glu-604, and Glu-618.

Belongs to the peptidase M24B family. Mn(2+) is required as a cofactor.

It carries out the reaction Release of any N-terminal amino acid, including proline, that is linked to proline, even from a dipeptide or tripeptide.. Its function is as follows. Catalyzes the removal of a penultimate prolyl residue from the N-termini of peptides. The polypeptide is Probable Xaa-Pro aminopeptidase P (AMPP) (Trichophyton verrucosum (strain HKI 0517)).